Here is a 443-residue protein sequence, read N- to C-terminus: Carboxypeptidase M (443 aa).

Positions 1-17 (MDRARLWLGLLLPVVAA) are cleaved as a signal peptide. In terms of domain architecture, Peptidase M14 spans 21 to 311 (RYHHQEGMEA…ASLIEYIKQV (291 aa)). N-linked (GlcNAc...) asparagine glycosylation occurs at asparagine 38. Zn(2+)-binding residues include histidine 83 and glutamate 86. 3 disulfide bridges follow: cysteine 138-cysteine 285, cysteine 242-cysteine 284, and cysteine 341-cysteine 410. The N-linked (GlcNAc...) asparagine glycan is linked to asparagine 164. Histidine 190 lines the Zn(2+) pocket. The active-site Proton donor/acceptor is the glutamate 281. Asparagine 363 carries N-linked (GlcNAc...) asparagine glycosylation. The GPI-anchor amidated serine moiety is linked to residue serine 423. A propeptide spans 424-443 (AATKPSLGVFFMTLLYVFFK) (removed in mature form).

This sequence belongs to the peptidase M14 family. Zn(2+) serves as cofactor.

It is found in the cell membrane. It catalyses the reaction Cleavage of C-terminal arginine or lysine residues from polypeptides.. Functionally, specifically removes C-terminal basic residues (Arg or Lys) from peptides and proteins. It is believed to play important roles in the control of peptide hormone and growth factor activity at the cell surface, and in the membrane-localized degradation of extracellular proteins. The sequence is that of Carboxypeptidase M (Cpm) from Mus musculus (Mouse).